The sequence spans 294 residues: Putative sugar lactone lactonase (294 aa).

Residues glutamate 21, asparagine 150, and aspartate 201 each coordinate a divalent metal cation. The active-site Proton donor/acceptor is aspartate 201.

This sequence belongs to the SMP-30/CGR1 family. Requires a divalent metal cation as cofactor.

Involved in the degradation of galactose via the DeLey-Doudoroff pathway. In Rhizobium meliloti (strain 1021) (Ensifer meliloti), this protein is Putative sugar lactone lactonase.